Here is a 514-residue protein sequence, read N- to C-terminus: HMG box-containing protein 1 (514 aa).

Positions Ala-150–Asn-182 are disordered. Residues Trp-170 to Asn-182 are compositionally biased toward basic and acidic residues. One can recognise an AXH domain in the interval Trp-203–Phe-345. Residues Cys-434–Trp-502 constitute a DNA-binding region (HMG box).

Binds the second PAH repeat of SIN3A. Binds TCF4. Binds RB1. Ubiquitinated by the CTLH E3 ubiquitin-protein ligase complex, leading to subsequent proteasomal degradation.

Its subcellular location is the nucleus. Functionally, transcriptional repressor that binds to the promoter region of target genes. Plays a role in the regulation of the cell cycle and of the Wnt pathway. Binds preferentially to the sequence 5'-TTCATTCATTCA-3'. Binding to the histone H1.0 promoter is enhanced by interaction with RB1. Disrupts the interaction between DNA and TCF4. The sequence is that of HMG box-containing protein 1 (HBP1) from Homo sapiens (Human).